The primary structure comprises 455 residues: SUN domain-containing protein 2 (455 aa).

Residues 1 to 12 (MSASTVSITASP) show a composition bias toward polar residues. The tract at residues 1 to 99 (MSASTVSITA…RTRKSQGNKI (99 aa)) is disordered. An N-acetylserine modification is found at S2. At 2–105 (SASTVSITAS…GNKIDRGKWK (104 aa)) the chain is on the nuclear side. S63 carries the post-translational modification Phosphoserine. Residues 74 to 88 (KSGSTATGTNTTTTQ) are compositionally biased toward low complexity. Positions 88–95 (QRRTRKSQ) match the Nuclear localization signal motif. Residues 106-128 (TVVRVFAKQFGALLLLVGLIQLI) form a helical membrane-spanning segment. At 129–455 (RKLTLKDSSL…ELDSVSVAHA (327 aa)) the chain is on the perinuclear space side. Residues 201 to 225 (LHSELKKVESKTERLQVSVDELNAK) adopt a coiled-coil conformation. In terms of domain architecture, SUN spans 285 to 447 (GGAFVMGHSD…YRFRVHGREL (163 aa)).

In terms of assembly, forms homomers (e.g. dimers, trimers and tetramers) and heteromers with SUN1. Interacts with SUN3, SUN4 and TIK. Core component of the LINC complex which is composed of inner nuclear membrane SUN domain-containing proteins coupled to outer nuclear membrane WIP and WIT proteins. The LINC complex also involves nucleoskeletal proteins CRWN/LINC and possibly KAKU4 and the cytoskeletal myosin KAKU1. Interacts with LINC1, WIP1, WIP2 and WIP3 at the nuclear envelope (NE). Interacts with SINE1, SINE2, SINE3 and SINE4. Interacts with NEAP1, NEA2 and NEAP3. In terms of tissue distribution, expressed in roots, hypocotyls, cotyledons and leaves and inflorescences.

Its subcellular location is the nucleus inner membrane. It localises to the cytoplasm. The protein localises to the cytoskeleton. It is found in the phragmoplast. The protein resides in the endoplasmic reticulum membrane. Its subcellular location is the nucleus envelope. Its function is as follows. Component of SUN-protein-containing multivariate complexes also called LINC complexes which link the nucleoskeleton and cytoskeleton by providing versatile outer nuclear membrane attachment sites for cytoskeletal filaments. Required for the maintenance and/or formation of polarized nuclear shape in root hairs. Modulates the anchoring and mobility of WIP proteins in the nuclear envelope (NE). In association with SUN1, may be involved in telomere attachment to nuclear envelope in the prophase of meiosis. As component of the SUN-WIP-WIT2-KAKU1 complex, mediates the transfer of cytoplasmic forces to the nuclear envelope (NE), leading to nuclear shape changes. This is SUN domain-containing protein 2 from Arabidopsis thaliana (Mouse-ear cress).